The following is a 339-amino-acid chain: Ketol-acid reductoisomerase (NADP(+)) (339 aa).

The KARI N-terminal Rossmann domain maps to 1 to 182 (MRVYYDRDAD…GGGRSGVIET (182 aa)). Residues 24–27 (YGSQ), arginine 48, serine 51, threonine 53, and 83–86 (DELQ) each bind NADP(+). Residue histidine 108 is part of the active site. Position 134 (glycine 134) interacts with NADP(+). Residues 183–328 (TFKEECETDL…EKLRGMMPWI (146 aa)) form the KARI C-terminal knotted domain. Aspartate 191, glutamate 195, glutamate 227, and glutamate 231 together coordinate Mg(2+). Residue serine 252 coordinates substrate.

The protein belongs to the ketol-acid reductoisomerase family. Requires Mg(2+) as cofactor.

It carries out the reaction (2R)-2,3-dihydroxy-3-methylbutanoate + NADP(+) = (2S)-2-acetolactate + NADPH + H(+). It catalyses the reaction (2R,3R)-2,3-dihydroxy-3-methylpentanoate + NADP(+) = (S)-2-ethyl-2-hydroxy-3-oxobutanoate + NADPH + H(+). The protein operates within amino-acid biosynthesis; L-isoleucine biosynthesis; L-isoleucine from 2-oxobutanoate: step 2/4. It participates in amino-acid biosynthesis; L-valine biosynthesis; L-valine from pyruvate: step 2/4. Its function is as follows. Involved in the biosynthesis of branched-chain amino acids (BCAA). Catalyzes an alkyl-migration followed by a ketol-acid reduction of (S)-2-acetolactate (S2AL) to yield (R)-2,3-dihydroxy-isovalerate. In the isomerase reaction, S2AL is rearranged via a Mg-dependent methyl migration to produce 3-hydroxy-3-methyl-2-ketobutyrate (HMKB). In the reductase reaction, this 2-ketoacid undergoes a metal-dependent reduction by NADPH to yield (R)-2,3-dihydroxy-isovalerate. This chain is Ketol-acid reductoisomerase (NADP(+)), found in Brucella anthropi (strain ATCC 49188 / DSM 6882 / CCUG 24695 / JCM 21032 / LMG 3331 / NBRC 15819 / NCTC 12168 / Alc 37) (Ochrobactrum anthropi).